A 422-amino-acid polypeptide reads, in one-letter code: Gamma-glutamyl phosphate reductase (422 aa).

Belongs to the gamma-glutamyl phosphate reductase family.

The protein resides in the cytoplasm. It carries out the reaction L-glutamate 5-semialdehyde + phosphate + NADP(+) = L-glutamyl 5-phosphate + NADPH + H(+). Its pathway is amino-acid biosynthesis; L-proline biosynthesis; L-glutamate 5-semialdehyde from L-glutamate: step 2/2. In terms of biological role, catalyzes the NADPH-dependent reduction of L-glutamate 5-phosphate into L-glutamate 5-semialdehyde and phosphate. The product spontaneously undergoes cyclization to form 1-pyrroline-5-carboxylate. This chain is Gamma-glutamyl phosphate reductase, found in Nitrosomonas europaea (strain ATCC 19718 / CIP 103999 / KCTC 2705 / NBRC 14298).